We begin with the raw amino-acid sequence, 510 residues long: NAD(P) transhydrogenase subunit alpha (510 aa).

Over 1-401 (MRIGIPRERL…EEKCTCSPWR (401 aa)) the chain is Cytoplasmic. NAD(+)-binding positions include 120–122 (RIS), Val175, 195–197 (DTR), Glu238, and Leu257. 2 consecutive transmembrane segments (helical) span residues 402–422 (KYAL…VAPK) and 423–443 (EFLG…YVVW). The Cytoplasmic portion of the chain corresponds to 444-452 (NVSHALHTP). The chain crosses the membrane as a helical span at residues 453–473 (LMSVTNAISGIIVVGALLQIG). The Periplasmic portion of the chain corresponds to 474–476 (QGG). A helical transmembrane segment spans residues 477–497 (WVSFLSFIAVLIASINIFGGF). At 498-510 (TVTQRMLKMFRKN) the chain is on the cytoplasmic side.

This sequence belongs to the AlaDH/PNT family. Heterodimer of an alpha (PntA) and a beta (PntB) chain. Alpha subunit serves as the dimerization unit.

It is found in the cell inner membrane. The enzyme catalyses NAD(+) + NADPH + H(+)(in) = NADH + NADP(+) + H(+)(out). The transhydrogenation between NADH and NADP is coupled to respiration and ATP hydrolysis and functions as a proton pump across the membrane. This chain is NAD(P) transhydrogenase subunit alpha (pntA), found in Escherichia coli (strain K12).